We begin with the raw amino-acid sequence, 422 residues long: UDP-N-acetylglucosamine 1-carboxyvinyltransferase (422 aa).

Residue 22 to 23 coordinates phosphoenolpyruvate; it reads KN. Residue R92 participates in UDP-N-acetyl-alpha-D-glucosamine binding. C116 acts as the Proton donor in catalysis. C116 carries the 2-(S-cysteinyl)pyruvic acid O-phosphothioketal modification. UDP-N-acetyl-alpha-D-glucosamine-binding positions include 121 to 125, D307, and L329; that span reads RPIDL.

It belongs to the EPSP synthase family. MurA subfamily.

It localises to the cytoplasm. It catalyses the reaction phosphoenolpyruvate + UDP-N-acetyl-alpha-D-glucosamine = UDP-N-acetyl-3-O-(1-carboxyvinyl)-alpha-D-glucosamine + phosphate. Its pathway is cell wall biogenesis; peptidoglycan biosynthesis. Cell wall formation. Adds enolpyruvyl to UDP-N-acetylglucosamine. The sequence is that of UDP-N-acetylglucosamine 1-carboxyvinyltransferase from Sulfurovum sp. (strain NBC37-1).